The chain runs to 558 residues: Glucose-6-phosphate isomerase (558 aa).

E362 serves as the catalytic Proton donor. Active-site residues include H393 and K523.

It belongs to the GPI family.

Its subcellular location is the cytoplasm. It carries out the reaction alpha-D-glucose 6-phosphate = beta-D-fructose 6-phosphate. The protein operates within carbohydrate degradation; glycolysis; D-glyceraldehyde 3-phosphate and glycerone phosphate from D-glucose: step 2/4. In Drosophila melanogaster (Fruit fly), this protein is Glucose-6-phosphate isomerase (Pgi).